We begin with the raw amino-acid sequence, 271 residues long: Cobalt import ATP-binding protein CbiO (271 aa).

One can recognise an ABC transporter domain in the interval 2-236 (LATSDLWFRY…TEAMEHAGLT (235 aa)). ATP is bound at residue 34–41 (GANGCGKS).

Belongs to the ABC transporter superfamily. Cobalt importer (TC 3.A.1.18.1) family. Forms an energy-coupling factor (ECF) transporter complex composed of an ATP-binding protein (A component, CbiO), a transmembrane protein (T component, CbiQ) and 2 possible substrate-capture proteins (S components, CbiM and CbiN) of unknown stoichimetry.

Its subcellular location is the cell inner membrane. The protein operates within cofactor biosynthesis; adenosylcobalamin biosynthesis. In terms of biological role, part of the energy-coupling factor (ECF) transporter complex CbiMNOQ involved in cobalt import. Presumably responsible for energy coupling to the transport system. The sequence is that of Cobalt import ATP-binding protein CbiO from Salmonella typhi.